The sequence spans 296 residues: Arginase (296 aa).

Positions 97, 120, 122, and 124 each coordinate Mn(2+). Substrate contacts are provided by residues 122 to 126, 133 to 135, and aspartate 176; these read HGDLN and SGN. Mn(2+)-binding residues include aspartate 223 and aspartate 225. Threonine 237 and glutamate 268 together coordinate substrate.

This sequence belongs to the arginase family. The cofactor is Mn(2+).

It catalyses the reaction L-arginine + H2O = urea + L-ornithine. It functions in the pathway nitrogen metabolism; urea cycle; L-ornithine and urea from L-arginine: step 1/1. Involved in the catabolism of arginine. The polypeptide is Arginase (Bacillus subtilis (strain 168)).